A 486-amino-acid polypeptide reads, in one-letter code: ATP-dependent rRNA helicase RRP3 (486 aa).

Positions 1–11 (MSKVTKQSKSH) are enriched in basic residues. Residues 1–52 (MSKVTKQSKSHKSSELVSLAEKIKQKALENRKQSREESQATEEANTASETEA) are disordered. Positions 17-49 (VSLAEKIKQKALENRKQSREESQATEEANTASE) form a coiled coil. Over residues 21 to 38 (EKIKQKALENRKQSREES) the composition is skewed to basic and acidic residues. The segment covering 41–52 (TEEANTASETEA) has biased composition (low complexity). The Q motif signature appears at 66 to 94 (SSFRELDLVPELIEACDNLNFTKPTPIQS). A Helicase ATP-binding domain is found at 97-269 (IPPALQGKDI…RASLTNPVKC (173 aa)). An ATP-binding site is contributed by 110-117 (AQTGSGKT). A DEAD box motif is present at residues 216 to 219 (DEAD). The Helicase C-terminal domain maps to 300 to 446 (LLNEFIGKTT…SIVLSLRDSV (147 aa)). The interval 459 to 486 (RRNKEKQTRGKGRRSRTATRENMDKEEE) is disordered. Residues 476–486 (ATRENMDKEEE) show a composition bias toward basic and acidic residues.

Belongs to the DEAD box helicase family. DDX47/RRP3 subfamily. In terms of assembly, interacts with the SSU processome.

The protein localises to the nucleus. The catalysed reaction is ATP + H2O = ADP + phosphate + H(+). In terms of biological role, ATP-dependent rRNA helicase required for pre-ribosomal RNA processing. Involved in the maturation of the 35S-pre-rRNA and to its cleavage to mature 18S rRNA. This Eremothecium gossypii (strain ATCC 10895 / CBS 109.51 / FGSC 9923 / NRRL Y-1056) (Yeast) protein is ATP-dependent rRNA helicase RRP3.